The following is a 303-amino-acid chain: Zinc transporter ZIP9-A (303 aa).

A helical membrane pass occupies residues 7–27 (ISLLSLAMLVGCYVSGIIPLA). Residue Asn29 is glycosylated (N-linked (GlcNAc...) asparagine). 5 helical membrane passes run 35-55 (LKLV…AVII), 102-122 (AYIG…DQIG), 142-162 (ITTT…LGAA), 172-192 (LIVF…LVSF), and 206-226 (HLLV…LGLS). The N-linked (GlcNAc...) asparagine glycan is linked to Asn237. Transmembrane regions (helical) follow at residues 240–260 (GVAM…HVLP) and 282–302 (LEVC…IGHQ).

This sequence belongs to the ZIP transporter (TC 2.A.5) family.

The protein resides in the golgi apparatus. It is found in the trans-Golgi network membrane. The protein localises to the cell membrane. Its subcellular location is the cytoplasm. It localises to the perinuclear region. The protein resides in the mitochondrion. It is found in the nucleus. It catalyses the reaction Zn(2+)(in) = Zn(2+)(out). Its function is as follows. Transports zinc ions across cell and organelle membranes into the cytoplasm and regulates intracellular zinc homeostasis. Participates in the zinc ions efflux out of the secretory compartments. Regulates intracellular zinc level, resulting in the enhancement of AKT1 and MAPK3/MAPK1 (Erk1/2) phosphorylation in response to the BCR activation. Also functions as a membrane androgen receptor that mediates, through a G protein, the non-classical androgen signaling pathway, characterized by the activation of MAPK3/MAPK1 (Erk1/2) and transcription factors CREB1 or ATF1. Moreover, has dual functions as a membrane-bound androgen receptor and as an androgen-dependent zinc transporter both of which are mediated through an inhibitory G protein (Gi) that mediates both MAP kinase and zinc signaling leading to the androgen-dependent apoptotic process. This Xenopus laevis (African clawed frog) protein is Zinc transporter ZIP9-A (slc39a9-a).